The primary structure comprises 36 residues: Photosystem I reaction center subunit VIII (36 aa).

Residues 9-29 traverse the membrane as a helical segment; the sequence is ISVPLVGLVFPAITMVLSFIY.

This sequence belongs to the PsaI family.

It localises to the plastid. Its subcellular location is the chloroplast thylakoid membrane. May help in the organization of the PsaL subunit. The protein is Photosystem I reaction center subunit VIII of Huperzia lucidula (Shining clubmoss).